Here is a 90-residue protein sequence, read N- to C-terminus: Iron oxidase (90 aa).

Residues 1 to 37 (MSEKDKMITRRDALRNIAVVVGSVATTTMMGVGVADA) constitute a signal peptide (tat-type signal). The [4Fe-4S] cluster site is built by Cys57, Cys60, Cys69, and Cys82.

The protein belongs to the high-potential iron-sulfur protein (HiPIP) family. As to quaternary structure, homomultimer. In terms of processing, predicted to be exported by the Tat system. The position of the signal peptide cleavage has been experimentally proven.

The protein resides in the periplasm. Functionally, catalyzes the oxidation of Fe(2+) to Fe(3+) coupled to cytochrome c552 reduction. The protein is Iron oxidase (iro) of Acidithiobacillus ferrooxidans (Thiobacillus ferrooxidans).